The primary structure comprises 327 residues: Undecaprenyl-phosphate 4-deoxy-4-formamido-L-arabinose transferase (327 aa).

Helical transmembrane passes span 236–256 and 270–290; these read LSLVGSVIALSGFTLAVLLVV and VFTLFAVLFMFIGAQFVGMGL.

Belongs to the glycosyltransferase 2 family.

The protein localises to the cell inner membrane. The enzyme catalyses UDP-4-deoxy-4-formamido-beta-L-arabinose + di-trans,octa-cis-undecaprenyl phosphate = 4-deoxy-4-formamido-alpha-L-arabinopyranosyl di-trans,octa-cis-undecaprenyl phosphate + UDP. Its pathway is glycolipid biosynthesis; 4-amino-4-deoxy-alpha-L-arabinose undecaprenyl phosphate biosynthesis; 4-amino-4-deoxy-alpha-L-arabinose undecaprenyl phosphate from UDP-4-deoxy-4-formamido-beta-L-arabinose and undecaprenyl phosphate: step 1/2. It participates in bacterial outer membrane biogenesis; lipopolysaccharide biosynthesis. Its function is as follows. Catalyzes the transfer of 4-deoxy-4-formamido-L-arabinose from UDP to undecaprenyl phosphate. The modified arabinose is attached to lipid A and is required for resistance to polymyxin and cationic antimicrobial peptides. The polypeptide is Undecaprenyl-phosphate 4-deoxy-4-formamido-L-arabinose transferase (Yersinia enterocolitica serotype O:8 / biotype 1B (strain NCTC 13174 / 8081)).